The sequence spans 371 residues: Cyanide hydratase (371 aa).

Residues 8–286 form the CN hydrolase domain; that stretch reads YKAAAVQAEP…EGLMFVEIDL (279 aa). The active-site Proton acceptor is the Glu48. The active site involves Lys130. Cys165 acts as the Nucleophile in catalysis. A disordered region spans residues 326 to 356; it reads DGGIGTYNTQDRVGLNRPLDAPKVDGPSGVS.

Belongs to the carbon-nitrogen hydrolase superfamily. Nitrilase family. As to quaternary structure, oligomer of dimers, forming left-handed helical fibers.

It carries out the reaction formamide = hydrogen cyanide + H2O. Catalyzes the hydration of cyanide to formamide. Degradation of cyanide may be important for plant pathogenic fungi in infection of cyanogenic plants. Can also transform some nitriles like 2-cyanopyridine and fumaronitrile and has a minor activity with 4-cyanophenyl acetonitrile (4-CPA). The sequence is that of Cyanide hydratase from Botryotinia fuckeliana (strain T4) (Noble rot fungus).